Consider the following 126-residue polypeptide: 5-carboxymethyl-2-hydroxymuconate Delta-isomerase (126 aa).

The active-site Proton acceptor; via imino nitrogen is Pro-2.

In terms of assembly, homotrimer.

It catalyses the reaction (2E,4Z)-5-hydroxypenta-2,4-diene-1,2,5-tricarboxylate = (3E,5R)-5-carboxy-2-oxohept-3-enedioate. It participates in aromatic compound metabolism; 4-hydroxyphenylacetate degradation; pyruvate and succinate semialdehyde from 4-hydroxyphenylacetate: step 4/7. Functionally, transforms 5-carboxymethyl-2-hydroxy-muconic acid (CHM) into 5-oxo-pent-3-ene-1,2,5-tricarboxylic acid (OPET). The chain is 5-carboxymethyl-2-hydroxymuconate Delta-isomerase (hpcD) from Escherichia coli.